Reading from the N-terminus, the 348-residue chain is Dual-specificity RNA methyltransferase RlmN (348 aa).

Glutamate 94 functions as the Proton acceptor in the catalytic mechanism. The Radical SAM core domain occupies 100-330 (GKHNWTACIS…TAIIRASRGR (231 aa)). Cysteine 107 and cysteine 336 are joined by a disulfide. 3 residues coordinate [4Fe-4S] cluster: cysteine 114, cysteine 118, and cysteine 121. S-adenosyl-L-methionine-binding positions include 163–164 (GE), serine 195, 217–219 (SLN), and asparagine 293. Cysteine 336 (S-methylcysteine intermediate) is an active-site residue.

This sequence belongs to the radical SAM superfamily. RlmN family. It depends on [4Fe-4S] cluster as a cofactor.

It localises to the cytoplasm. It catalyses the reaction adenosine(2503) in 23S rRNA + 2 reduced [2Fe-2S]-[ferredoxin] + 2 S-adenosyl-L-methionine = 2-methyladenosine(2503) in 23S rRNA + 5'-deoxyadenosine + L-methionine + 2 oxidized [2Fe-2S]-[ferredoxin] + S-adenosyl-L-homocysteine. The enzyme catalyses adenosine(37) in tRNA + 2 reduced [2Fe-2S]-[ferredoxin] + 2 S-adenosyl-L-methionine = 2-methyladenosine(37) in tRNA + 5'-deoxyadenosine + L-methionine + 2 oxidized [2Fe-2S]-[ferredoxin] + S-adenosyl-L-homocysteine. Specifically methylates position 2 of adenine 2503 in 23S rRNA and position 2 of adenine 37 in tRNAs. m2A2503 modification seems to play a crucial role in the proofreading step occurring at the peptidyl transferase center and thus would serve to optimize ribosomal fidelity. The sequence is that of Dual-specificity RNA methyltransferase RlmN from Syntrophus aciditrophicus (strain SB).